The sequence spans 36 residues: uncharacterized protein (36 aa).

It localises to the mitochondrion. This is an uncharacterized protein from Saccharomyces cerevisiae (strain ATCC 204508 / S288c) (Baker's yeast).